The primary structure comprises 480 residues: Glutamate--tRNA ligase (480 aa).

A 'HIGH' region motif is present at residues 21–31 (PSPTGYLHVGG). Positions 110, 112, 137, and 139 each coordinate Zn(2+). The 'KMSKS' region signature appears at 248–252 (KLSKR). Lys251 lines the ATP pocket.

This sequence belongs to the class-I aminoacyl-tRNA synthetase family. Glutamate--tRNA ligase type 1 subfamily. As to quaternary structure, monomer. Zn(2+) is required as a cofactor.

The protein localises to the cytoplasm. The catalysed reaction is tRNA(Glu) + L-glutamate + ATP = L-glutamyl-tRNA(Glu) + AMP + diphosphate. Its function is as follows. Catalyzes the attachment of glutamate to tRNA(Glu) in a two-step reaction: glutamate is first activated by ATP to form Glu-AMP and then transferred to the acceptor end of tRNA(Glu). In Actinobacillus succinogenes (strain ATCC 55618 / DSM 22257 / CCUG 43843 / 130Z), this protein is Glutamate--tRNA ligase.